We begin with the raw amino-acid sequence, 88 residues long: Phosphocarrier protein HPr (88 aa).

In terms of domain architecture, HPr spans 1-88; sequence MKKIQVVVKD…KAVLEKHQVI (88 aa). The active-site Pros-phosphohistidine intermediate is the His-15. Phosphoserine; by HPrK/P is present on Ser-47.

It belongs to the HPr family.

The protein resides in the cytoplasm. Phosphorylation on Ser-47 inhibits the phosphoryl transfer from enzyme I to HPr. In terms of biological role, general (non sugar-specific) component of the phosphoenolpyruvate-dependent sugar phosphotransferase system (sugar PTS). This major carbohydrate active-transport system catalyzes the phosphorylation of incoming sugar substrates concomitantly with their translocation across the cell membrane. The phosphoryl group from phosphoenolpyruvate (PEP) is transferred to the phosphoryl carrier protein HPr by enzyme I. Phospho-HPr then transfers it to the PTS EIIA domain. Functionally, P-Ser-HPr interacts with the catabolite control protein A (CcpA), forming a complex that binds to DNA at the catabolite response elements cre, operator sites preceding a large number of catabolite-regulated genes. Thus, P-Ser-HPr is a corepressor in carbon catabolite repression (CCR), a mechanism that allows bacteria to coordinate and optimize the utilization of available carbon sources. P-Ser-HPr also plays a role in inducer exclusion, in which it probably interacts with several non-PTS permeases and inhibits their transport activity. The sequence is that of Phosphocarrier protein HPr (ptsH) from Mycoplasma pneumoniae (strain ATCC 29342 / M129 / Subtype 1) (Mycoplasmoides pneumoniae).